Here is a 454-residue protein sequence, read N- to C-terminus: MLSSQTSSIFTVSRLNQTVRLLLEQEMGQVWISGEISNFTQPASGHWYFTLKDDTAQVRCAMFRNSNRRVTFRPQHGQQVLVRANITLYEPRGDYQIIVESMQPAGEGLLQQKYEQLKAKLQAEGLFDQQYKHPLPSPAYCVGVITSKTGAALHDILHVLKRRDPSLPVIIYPAAVQGEDAPGQIVRAITLANARKECDVLIVGRGGGSLEDLWSFNDERVARAIFASTIPVVSAVGHETDVTIADFVADLRAPTPSAAAEVVSRNQQELLRQMQTACQRLEMAMDYYLANRQRRFSQLYHRLQQQHPQLRLARQQTTLERLRQRMHLALENQLKQANQRQQRASQRLRQQNPQPRIHRAQSRIQQLEYRLAENFRARLSEQRERFGNTVTHLEAVSPLATLARGYSVSTATDGNVLKKVKQLKVGDMMTTRLKDGWVTSEVTAIKPVKKIRLG.

Positions 337 to 352 (ANQRQQRASQRLRQQN) are enriched in low complexity. The segment at 337-359 (ANQRQQRASQRLRQQNPQPRIHR) is disordered.

This sequence belongs to the XseA family. In terms of assembly, heterooligomer composed of large and small subunits.

It localises to the cytoplasm. It catalyses the reaction Exonucleolytic cleavage in either 5'- to 3'- or 3'- to 5'-direction to yield nucleoside 5'-phosphates.. Bidirectionally degrades single-stranded DNA into large acid-insoluble oligonucleotides, which are then degraded further into small acid-soluble oligonucleotides. The chain is Exodeoxyribonuclease 7 large subunit from Salmonella arizonae (strain ATCC BAA-731 / CDC346-86 / RSK2980).